The chain runs to 311 residues: 4-diphosphocytidyl-2-C-methyl-D-erythritol kinase (311 aa).

Residue Lys-16 is part of the active site. An ATP-binding site is contributed by 100–110 (PIGAGLAGGSS). Asp-142 is a catalytic residue.

It belongs to the GHMP kinase family. IspE subfamily.

The catalysed reaction is 4-CDP-2-C-methyl-D-erythritol + ATP = 4-CDP-2-C-methyl-D-erythritol 2-phosphate + ADP + H(+). Its pathway is isoprenoid biosynthesis; isopentenyl diphosphate biosynthesis via DXP pathway; isopentenyl diphosphate from 1-deoxy-D-xylulose 5-phosphate: step 3/6. In terms of biological role, catalyzes the phosphorylation of the position 2 hydroxy group of 4-diphosphocytidyl-2C-methyl-D-erythritol. This is 4-diphosphocytidyl-2-C-methyl-D-erythritol kinase from Prochlorococcus marinus (strain MIT 9215).